Reading from the N-terminus, the 262-residue chain is Tryptophan synthase alpha chain (262 aa).

Residues Glu48 and Asp59 each act as proton acceptor in the active site.

This sequence belongs to the TrpA family. In terms of assembly, tetramer of two alpha and two beta chains.

The catalysed reaction is (1S,2R)-1-C-(indol-3-yl)glycerol 3-phosphate + L-serine = D-glyceraldehyde 3-phosphate + L-tryptophan + H2O. The protein operates within amino-acid biosynthesis; L-tryptophan biosynthesis; L-tryptophan from chorismate: step 5/5. The alpha subunit is responsible for the aldol cleavage of indoleglycerol phosphate to indole and glyceraldehyde 3-phosphate. The protein is Tryptophan synthase alpha chain of Helicobacter pylori (strain P12).